The primary structure comprises 515 residues: Nectin-1 (515 aa).

An N-terminal signal peptide occupies residues 1 to 30 (MARMGLAGAAGRWWGLALGLTAFFLPGTHT). The Ig-like V-type domain occupies 31–141 (QVVQVNDSMY…GNRESQLNLT (111 aa)). Over 31 to 354 (QVVQVNDSMY…GRRAGQMPTA (324 aa)) the chain is Extracellular. N-linked (GlcNAc...) asparagine glycosylation is found at asparagine 36, asparagine 72, asparagine 139, asparagine 202, asparagine 286, asparagine 297, and asparagine 332. A disulfide bridge links cysteine 51 with cysteine 124. Ig-like C2-type domains are found at residues 145-243 (KPTN…TLNV) and 247-334 (PEVT…VNIT). 2 disulfides stabilise this stretch: cysteine 172/cysteine 226 and cysteine 269/cysteine 316. The interval 282 to 299 (WTTLNGSLPKGVEAQNRT) is interaction with FGFR. A helical transmembrane segment spans residues 355–375 (IIGGVAGSVLLVLIVVGGIIV). Residues 376 to 515 (ALRRRRHTFK…SFISKKEWYV (140 aa)) lie on the Cytoplasmic side of the membrane. Residues 399–486 (YSKAGIPQHH…DGYGDRTLGY (88 aa)) form a disordered region. Residues serine 421, serine 433, and serine 434 each carry the phosphoserine modification. Residue tyrosine 435 is modified to Phosphotyrosine. Over residues 447 to 464 (GERKVGGPHPKYDEDAKR) the composition is skewed to basic and acidic residues. Phosphoserine is present on serine 509.

Belongs to the nectin family. As to quaternary structure, cis- and trans-homodimer. Can form trans-heterodimers with NECTIN3 and with NECTIN4. Interaction between NECTIN1 and NECTIN3 on the pre- and postsynaptic sites, respectively, initiates the formation of puncta adherentia junctions between axons and dendrites. Interacts (via cytoplasmic domain) with AFDN (via PDZ domain); this interaction recruits NECTIN1 to cadherin-based adherens junctions and provides a connection with the actin cytoskeleton. Interacts with integrin alphaV/beta3. Interacts (via Ig-like C2-type domain 2) with FGFR1, FGFR2 and FGFR3. (Microbial infection) Interacts with herpes pseudorabies virus/PRV envelope glycoprotein D.

It localises to the cell membrane. Its subcellular location is the cell junction. The protein localises to the adherens junction. It is found in the presynaptic cell membrane. Cell adhesion molecule that promotes cell-cell contacts and plays important roles in the development of the nervous system. Acts by forming homophilic or heterophilic trans-dimers. Heterophilic interactions have been detected between NECTIN1 and NECTIN3 and between NECTIN1 and NECTIN4. Involved in axon guidance by promoting contacts between the commissural axons and the floor plate cells. Involved in synaptogegesis. Has some neurite outgrowth-promoting activity. Promotes formation of checkerboard-like cellular pattern of hair cells and supporting cells in the auditory epithelium via heterophilic interaction with NECTIN3: NECTIN1 is present in the membrane of hair cells and associates with NECTIN3 on supporting cells, thereby mediating heterotypic adhesion between these two cell types. Required for enamel mineralization. In terms of biological role, (Microbial infection) Acts as a receptor for pseudorabies virus/PRV. This is Nectin-1 from Mus musculus (Mouse).